We begin with the raw amino-acid sequence, 353 residues long: Terpene synthase 1 (353 aa).

Residues 81–86 carry the DDxx(x)D/E motif motif; that stretch reads DDAIDA. The NDxxSxxxD/E motif signature appears at 222-230; the sequence is NDLVSYEKE.

It belongs to the terpene synthase family.

It catalyses the reaction (2E,6E)-farnesyl diphosphate = (2S,3R,6S,9S)-(-)-protoillud-7-ene + diphosphate. Its function is as follows. Terpene synthase that converts its substrate farnesyl diphosphate (FPP) into the sesquiterpene protoillud-7-ene. The chain is Terpene synthase 1 from Tieghemostelium lacteum (Slime mold).